A 333-amino-acid polypeptide reads, in one-letter code: Lipoyl synthase (333 aa).

The disordered stretch occupies residues 1 to 29 (MTDSASGASAVANIATPSNEPYDATRKQK). Residues Cys-80, Cys-85, Cys-91, Cys-106, Cys-110, Cys-113, and Ser-320 each contribute to the [4Fe-4S] cluster site. Positions 91 to 309 (CFGKGTATFM…EEKAYEMGFT (219 aa)) constitute a Radical SAM core domain.

The protein belongs to the radical SAM superfamily. Lipoyl synthase family. [4Fe-4S] cluster is required as a cofactor.

It is found in the cytoplasm. The catalysed reaction is [[Fe-S] cluster scaffold protein carrying a second [4Fe-4S](2+) cluster] + N(6)-octanoyl-L-lysyl-[protein] + 2 oxidized [2Fe-2S]-[ferredoxin] + 2 S-adenosyl-L-methionine + 4 H(+) = [[Fe-S] cluster scaffold protein] + N(6)-[(R)-dihydrolipoyl]-L-lysyl-[protein] + 4 Fe(3+) + 2 hydrogen sulfide + 2 5'-deoxyadenosine + 2 L-methionine + 2 reduced [2Fe-2S]-[ferredoxin]. Its pathway is protein modification; protein lipoylation via endogenous pathway; protein N(6)-(lipoyl)lysine from octanoyl-[acyl-carrier-protein]: step 2/2. Functionally, catalyzes the radical-mediated insertion of two sulfur atoms into the C-6 and C-8 positions of the octanoyl moiety bound to the lipoyl domains of lipoate-dependent enzymes, thereby converting the octanoylated domains into lipoylated derivatives. The sequence is that of Lipoyl synthase from Ralstonia nicotianae (strain ATCC BAA-1114 / GMI1000) (Ralstonia solanacearum).